The sequence spans 184 residues: Cytidylate kinase (184 aa).

Position 8–16 (8–16) interacts with ATP; it reads GQPGSGKTT.

It belongs to the cytidylate kinase family. Type 2 subfamily.

The protein resides in the cytoplasm. The catalysed reaction is CMP + ATP = CDP + ADP. It catalyses the reaction dCMP + ATP = dCDP + ADP. In Pyrobaculum aerophilum (strain ATCC 51768 / DSM 7523 / JCM 9630 / CIP 104966 / NBRC 100827 / IM2), this protein is Cytidylate kinase.